We begin with the raw amino-acid sequence, 318 residues long: tRNA U34 carboxymethyltransferase (318 aa).

Carboxy-S-adenosyl-L-methionine contacts are provided by residues K85, W99, K104, G124, 175 to 176 (LD), M190, Y194, and R311.

Belongs to the class I-like SAM-binding methyltransferase superfamily. CmoB family. Homotetramer.

It catalyses the reaction carboxy-S-adenosyl-L-methionine + 5-hydroxyuridine(34) in tRNA = 5-carboxymethoxyuridine(34) in tRNA + S-adenosyl-L-homocysteine + H(+). Its function is as follows. Catalyzes carboxymethyl transfer from carboxy-S-adenosyl-L-methionine (Cx-SAM) to 5-hydroxyuridine (ho5U) to form 5-carboxymethoxyuridine (cmo5U) at position 34 in tRNAs. The chain is tRNA U34 carboxymethyltransferase from Ruthia magnifica subsp. Calyptogena magnifica.